Consider the following 204-residue polypeptide: Phosphoribosyl-dephospho-CoA transferase (204 aa).

Catalysis depends on residues D129 and D131.

The protein belongs to the MdcG family.

The enzyme catalyses apo-[malonate decarboxylase ACP] + 2'-(5''-triphospho-alpha-D-ribosyl)-3'-dephospho-CoA = holo-[malonate decarboxylase ACP] + diphosphate. In terms of biological role, transfers 2'-(5-triphosphoribosyl)-3'-dephosphocoenzyme-A to the apo-[acyl-carrier-protein] of the malonate decarboxylase to yield holo-[acyl-carrier-protein]. The protein is Phosphoribosyl-dephospho-CoA transferase of Pseudomonas putida (strain W619).